We begin with the raw amino-acid sequence, 258 residues long: L-fucose dehydrogenase (258 aa).

Residues serine 17, isoleucine 19, arginine 39, histidine 40, glutamate 63, leucine 64, and asparagine 90 each coordinate NADP(+). Beta-L-fucose contacts are provided by asparagine 94, serine 140, lysine 141, glutamine 147, and tyrosine 153. Residues tyrosine 153 and lysine 157 each contribute to the NADP(+) site. Tyrosine 153 serves as the catalytic Proton acceptor. The beta-L-fucose site is built by alanine 184 and glutamate 185. Positions 186 and 188 each coordinate NADP(+).

Belongs to the short-chain dehydrogenases/reductases (SDR) family. Homotetramer; dimer of dimers.

The catalysed reaction is beta-L-fucose + NADP(+) = L-fucono-1,5-lactone + NADPH + H(+). The enzyme catalyses D-arabinose + NADP(+) = D-arabinono-1,5-lactone + NADPH + H(+). It functions in the pathway carbohydrate degradation; L-fucose degradation. Its function is as follows. L-fucose dehydrogenase involved in an L-fucose degradation pathway. Catalyzes the oxidation of L-fucose to L-fucono-1,5-lactone. Can also act on D-arabinose, with lower catalytic efficiency, and has weak activity with L-galactose and 4-deoxy-L-fucose. Shows a preference for NADP(+) over NAD(+). The protein is L-fucose dehydrogenase of Burkholderia multivorans (strain ATCC 17616 / 249).